We begin with the raw amino-acid sequence, 646 residues long: Protein SENSITIVE TO UV 2 (646 aa).

Residues 42 to 70 (PAPPPSTKISSSLSHPMQLQSSAGQQRKQ) form a disordered region. Polar residues predominate over residues 48–70 (TKISSSLSHPMQLQSSAGQQRKQ). A Nuclear localization signal motif is present at residues 119–126 (NRRCDSEK). Positions 123–157 (DSEKDLEIDRLKKELERVSKQLLDVEQECSQLKKG) form a coiled coil. The region spanning 376–646 (KRTEQDVKQE…VFAFLGDNTI (271 aa)) is the Phosphatase tensin-type domain.

The protein belongs to the serpin family. As to quaternary structure, forms multimers through the coiled-coil domain. Post-translationally, probably phosphorylated by ATR. In terms of tissue distribution, accumulates throughout the root tip.

It localises to the nucleus. The protein localises to the cytoplasm. Functionally, required for tolerance to DNA-damaging and cross-linking agents such as UVB irradiation, gamma-radiation, aphidicolin, ionizing radiation and hydroxyurea (HU), cisplatin (CDDP) and mitomycin C (MMC). Involved in cell-cycle G2/M arrest in response to DNA damage. Required for aluminum-dependent gene regulation and root growth inhibition in an ATR-dependent manner by halting cell cycle progression and triggering loss of the quiescent center (QC). This chain is Protein SENSITIVE TO UV 2, found in Arabidopsis thaliana (Mouse-ear cress).